Reading from the N-terminus, the 218-residue chain is Elongation factor Ts (218 aa).

Residues 82-85 (TDFV) form an involved in Mg(2+) ion dislocation from EF-Tu region.

It belongs to the EF-Ts family.

The protein localises to the cytoplasm. Functionally, associates with the EF-Tu.GDP complex and induces the exchange of GDP to GTP. It remains bound to the aminoacyl-tRNA.EF-Tu.GTP complex up to the GTP hydrolysis stage on the ribosome. In Prochlorococcus marinus (strain MIT 9211), this protein is Elongation factor Ts.